The chain runs to 335 residues: Adenosine deaminase (335 aa).

The Zn(2+) site is built by H12 and H14. Substrate-binding residues include H14 and D16. H197 lines the Zn(2+) pocket. Residue E200 is the Proton donor of the active site. D278 is a Zn(2+) binding site.

This sequence belongs to the metallo-dependent hydrolases superfamily. Adenosine and AMP deaminases family. Adenosine deaminase subfamily. Zn(2+) is required as a cofactor.

It carries out the reaction adenosine + H2O + H(+) = inosine + NH4(+). The catalysed reaction is 2'-deoxyadenosine + H2O + H(+) = 2'-deoxyinosine + NH4(+). In terms of biological role, catalyzes the hydrolytic deamination of adenosine and 2-deoxyadenosine. The sequence is that of Adenosine deaminase from Clostridium botulinum (strain Okra / Type B1).